A 66-amino-acid polypeptide reads, in one-letter code: Nigrocin-2ISb (66 aa).

The first 22 residues, 1–22, serve as a signal peptide directing secretion; it reads MFTLKKSMLLLFFLGTINLSLC. The propeptide at 23-43 is removed in mature form; it reads QEERDAEEERRDEDNAKMEEI. Residues C60 and C66 are joined by a disulfide bond.

In terms of tissue distribution, expressed by the skin glands.

The protein resides in the secreted. Functionally, has antimicrobial activity against Gram-negative bacterium E.coli ATCC 8739 (MIC=50 ug), against Gram positive bacteria S.aureus ATCC 6538 (MIC=3.1 ug), methicillin-resistant S.aureus ATCC 43300 (MIC=12.5 ug), B.subtilis ATCC 6633 (MIC=12.5 ug) and against fungus C.albicans ATCC 90028 (MIC=50 ug). This is Nigrocin-2ISb from Odorrana ishikawae (Ishikawa's frog).